A 323-amino-acid chain; its full sequence is MDEKGRSLKNNNMEDEMDLKRGPWTAEEDFKLMNYIATNGEGRWNSLSRCAGLQRTGKSCRLRWLNYLRPDVRRGNITLEEQLLILELHSRWGNRWSKIAQYLPGRTDNEIKNYWRTRVQKHAKQLKCDVNSQQFKDTMKYLWMPRLVERIQSASASSAAAATTTTTTTTGSAGTSSCITTSNNQFMNYDYNNNNMGQQFGVMSNNDYITPENSSVAVSPASDLTEYYSAPNPNPEYYSGQMGNSYYPDQNLVSSQLLPDNYFDYSGLLDEDLTAMQEQSNLSWFENINGAASSSDSLWNIGETDEEFWFLQQQQQFNNNGSF.

HTH myb-type domains are found at residues 16-68 (EMDL…LNYL) and 69-123 (RPDV…QKHA). DNA-binding regions (H-T-H motif) lie at residues 44-68 (WNSLSRCAGLQRTGKSCRLRWLNYL) and 96-119 (WSKIAQYLPGRTDNEIKNYWRTRV).

In terms of assembly, interacts with BOI, but not with BRG1. Ubiquitinated in vitro by BOI. Expressed specifically in flowers. Restricted to anthers in maturing flowers. Strongest expression in the vascular and connective tissue where the anther attaches to the filament. Not detected in pollen.

Its subcellular location is the nucleus. Its function is as follows. Transcription factor contributing to the regulation of stamen maturation and male fertility in response to jasmonate signaling. Required for correct timing of anther dehiscence. Acts as a negative regulator of abscisic acid-induced cell death. Not involved in the regulation of BOI. Regulated by MYB21 and at a lower level by MYB24. Negatively regulated by the proteasome in an SCF(COI1) E3 ubiquitin-protein ligase complex-dependent manner. This is Transcription factor MYB108 (MYB108) from Arabidopsis thaliana (Mouse-ear cress).